The primary structure comprises 600 residues: Spastin (600 aa).

The tract at residues 1–39 (MNSPGGRNDKKKPVTPAAETGPGSPTTPPSTETQVVLAP) is disordered. Residues 1-53 (MNSPGGRNDKKKPVTPAAETGPGSPTTPPSTETQVVLAPPSPHKRNLHLFSYP) lie on the Cytoplasmic side of the membrane. The segment covering 15-33 (TPAAETGPGSPTTPPSTET) has biased composition (low complexity). The helical intramembrane region spans 54–74 (LLAVFSLLRFLAFQLGLLFVW). Over 75 to 600 (CCELLSRSVM…WNQDFGDTTV (526 aa)) the chain is Cytoplasmic. One can recognise an MIT domain in the interval 110 to 185 (YHQQAFQYIS…IMAKDRLQLL (76 aa)). The interval 213-294 (GLLKPEKGAV…KPATPTTAVR (82 aa)) is disordered. Residues 216-228 (KPEKGAVPKKKDP) show a composition bias toward basic and acidic residues. The segment covering 253-291 (PNCTSVPTSARQAGAHTPSNRGATGKNNTRTNKPATPTT) has biased composition (polar residues). 366 to 373 (GPPGNGKT) contributes to the ATP binding site.

It belongs to the AAA ATPase family. Spastin subfamily. Homohexamer. The homohexamer is stabilized by ATP-binding. The homohexamer may adopt a ring conformation through which microtubules pass prior to being severed. Interacts with microtubules.

The protein resides in the membrane. It is found in the cytoplasm. It localises to the cytoskeleton. The protein localises to the microtubule organizing center. Its subcellular location is the centrosome. The protein resides in the perinuclear region. It is found in the nucleus. It catalyses the reaction n ATP + n H2O + a microtubule = n ADP + n phosphate + (n+1) alpha/beta tubulin heterodimers.. Its function is as follows. ATP-dependent microtubule severing protein that specifically recognizes and cuts microtubules that are polyglutamylated. Preferentially recognizes and acts on microtubules decorated with short polyglutamate tails: severing activity increases as the number of glutamates per tubulin rises from one to eight, but decreases beyond this glutamylation threshold. Microtubule severing promotes reorganization of cellular microtubule arrays and the release of microtubules from the centrosome following nucleation. Required for membrane traffic from the endoplasmic reticulum (ER) to the Golgi and for completion of the abscission stage of cytokinesis. Also plays a role in axon growth and the formation of axonal branches. In Xenopus laevis (African clawed frog), this protein is Spastin.